A 148-amino-acid polypeptide reads, in one-letter code: UPF0756 membrane protein YeaL (148 aa).

Transmembrane regions (helical) follow at residues 14–34 (ALGFISHNTTVAVSILVLIIV), 51–71 (LSIGIIILTIGVMAPIASGTL), 86–106 (LVAIAVGVIVSWLGGRGVTLM), and 121–141 (VLGVALFRGVPVGPLIAAGLV).

The protein belongs to the UPF0756 family.

It is found in the cell membrane. The protein is UPF0756 membrane protein YeaL of Shigella flexneri.